We begin with the raw amino-acid sequence, 162 residues long: tRNA (cytidine(34)-2'-O)-methyltransferase (162 aa).

S-adenosyl-L-methionine-binding residues include L83, G105, I127, and S135.

Belongs to the class IV-like SAM-binding methyltransferase superfamily. RNA methyltransferase TrmH family. TrmL subfamily. Homodimer.

The protein resides in the cytoplasm. It catalyses the reaction cytidine(34) in tRNA + S-adenosyl-L-methionine = 2'-O-methylcytidine(34) in tRNA + S-adenosyl-L-homocysteine + H(+). It carries out the reaction 5-carboxymethylaminomethyluridine(34) in tRNA(Leu) + S-adenosyl-L-methionine = 5-carboxymethylaminomethyl-2'-O-methyluridine(34) in tRNA(Leu) + S-adenosyl-L-homocysteine + H(+). Its function is as follows. Methylates the ribose at the nucleotide 34 wobble position in the two leucyl isoacceptors tRNA(Leu)(CmAA) and tRNA(Leu)(cmnm5UmAA). Catalyzes the methyl transfer from S-adenosyl-L-methionine to the 2'-OH of the wobble nucleotide. In Photorhabdus asymbiotica subsp. asymbiotica (strain ATCC 43949 / 3105-77) (Xenorhabdus luminescens (strain 2)), this protein is tRNA (cytidine(34)-2'-O)-methyltransferase.